The chain runs to 231 residues: WAP four-disulfide core domain protein 3 (231 aa).

A signal peptide spans 1 to 24 (MMLSCLFLLKALLALGSLESWITA). WAP domains lie at 26 to 68 (EHAK…CRDI), 69 to 114 (PKGR…VVPI), 119 to 162 (LAEF…LGDI), and 163 to 207 (EGGR…VPPV). Cystine bridges form between C33–C57, C40–C61, C44–C56, C50–C65, C76–C102, C85–C106, C89–C101, C95–C110, C126–C150, C133–C154, C137–C149, C143–C158, C170–C195, C178–C199, C182–C194, and C188–C203. N107 carries N-linked (GlcNAc...) asparagine glycosylation. Residue N217 is glycosylated (N-linked (GlcNAc...) asparagine).

Ubiquitously expressed.

Its subcellular location is the secreted. The protein is WAP four-disulfide core domain protein 3 (WFDC3) of Homo sapiens (Human).